The chain runs to 690 residues: Glycine--tRNA ligase beta subunit (690 aa).

The protein belongs to the class-II aminoacyl-tRNA synthetase family. In terms of assembly, tetramer of two alpha and two beta subunits.

The protein localises to the cytoplasm. It carries out the reaction tRNA(Gly) + glycine + ATP = glycyl-tRNA(Gly) + AMP + diphosphate. This chain is Glycine--tRNA ligase beta subunit, found in Syntrophus aciditrophicus (strain SB).